Reading from the N-terminus, the 1482-residue chain is Chromosome partition protein MukB (1482 aa).

34 to 41 lines the ATP pocket; that stretch reads GGNGAGKS. Coiled-coil stretches lie at residues 337 to 418, 444 to 472, 509 to 601, 781 to 805, 835 to 1116, and 1210 to 1265; these read LNLV…QYQQ, LDTY…QTAH, RHLA…TSHA, AARE…ATLS, EAEI…AKAG, and EAIE…LQSV. The segment at 666–783 is flexible hinge; the sequence is PGGAEDARLN…SVPLFGRAAR (118 aa). The tract at residues 1049–1077 is disordered; the sequence is ADAGAEERARQRRDELHTRLSNNRSRRNQ. The segment covering 1051–1066 has biased composition (basic and acidic residues); sequence AGAEERARQRRDELHT.

This sequence belongs to the SMC family. MukB subfamily. In terms of assembly, homodimerization via its hinge domain. Binds to DNA via its C-terminal region. Interacts, and probably forms a ternary complex, with MukE and MukF via its C-terminal region. The complex formation is stimulated by calcium or magnesium. Interacts with tubulin-related protein FtsZ.

It is found in the cytoplasm. The protein localises to the nucleoid. Its function is as follows. Plays a central role in chromosome condensation, segregation and cell cycle progression. Functions as a homodimer, which is essential for chromosome partition. Involved in negative DNA supercoiling in vivo, and by this means organize and compact chromosomes. May achieve or facilitate chromosome segregation by condensation DNA from both sides of a centrally located replisome during cell division. The polypeptide is Chromosome partition protein MukB (Cronobacter sakazakii (strain ATCC BAA-894) (Enterobacter sakazakii)).